The following is a 322-amino-acid chain: UDP-N-acetylenolpyruvoylglucosamine reductase (322 aa).

Residues 36 to 202 enclose the FAD-binding PCMH-type domain; that stretch reads RAGGPAQVLF…TSVLFEGVPG (167 aa). Residue Arg182 is part of the active site. Ser231 serves as the catalytic Proton donor. Glu301 is an active-site residue.

Belongs to the MurB family. Requires FAD as cofactor.

It is found in the cytoplasm. It carries out the reaction UDP-N-acetyl-alpha-D-muramate + NADP(+) = UDP-N-acetyl-3-O-(1-carboxyvinyl)-alpha-D-glucosamine + NADPH + H(+). Its pathway is cell wall biogenesis; peptidoglycan biosynthesis. In terms of biological role, cell wall formation. This is UDP-N-acetylenolpyruvoylglucosamine reductase from Brucella suis biovar 1 (strain 1330).